We begin with the raw amino-acid sequence, 25 residues long: Ribosome-inactivating protein velutin (25 aa).

The disordered stretch occupies residues 1 to 25; that stretch reads XHPDLFXXRPDNTASPKFEDPRLNP.

This sequence belongs to the ribosome-inactivating protein family.

The catalysed reaction is Endohydrolysis of the N-glycosidic bond at one specific adenosine on the 28S rRNA.. Its function is as follows. Inhibits protein synthesis but does not possess ribonuclease activity. Also inhibits HIV-1 reverse transcriptase, beta-glucosidase and beta-glucuronidase. The polypeptide is Ribosome-inactivating protein velutin (Flammulina velutipes (Agaricus velutipes)).